We begin with the raw amino-acid sequence, 1029 residues long: Putative guanine nucleotide-exchange factor SED4 (1029 aa).

Residues 1 to 344 (MVFDSEYDLG…AMGGSNLWKS (344 aa)) are Cytoplasmic-facing. WD repeat units lie at residues 257 to 296 (KDYKKITAMDVDPKGQLIALTTDDNSLALLSVKKLNVIKL) and 300 to 339 (VHKDTITRVTVSPGGQYVATGSTDKTVHIFKISPDAMGGS). A helical; Signal-anchor for type II membrane protein membrane pass occupies residues 345 to 365 (LLRFLFNVMKLAVVVIWAHLF). The Lumenal portion of the chain corresponds to 366–1029 (YKYDLHHKLY…TQHNVINDEL (664 aa)). N-linked (GlcNAc...) asparagine glycosylation occurs at Asn579. The span at 579-592 (NASTSISIEESTNS) shows a compositional bias: low complexity. Disordered stretches follow at residues 579 to 673 (NAST…NSIV), 710 to 732 (VVDENHSESKLPTEAKTSIVGSI), and 747 to 821 (EAVK…SQIS). A compositionally biased stretch (polar residues) spans 593 to 603 (HSTFIESSSSL). The N-linked (GlcNAc...) asparagine glycan is linked to Asn608. A compositionally biased stretch (basic and acidic residues) spans 613–628 (SSREISSETSIIKEDM). The span at 633–642 (ENVSEQSATD) shows a compositional bias: polar residues. Asn634 and Asn647 each carry an N-linked (GlcNAc...) asparagine glycan. The segment covering 643–654 (KVNKNQSIDKID) has biased composition (basic and acidic residues). Residues 655–672 (VSSSSSIPTSSEGSSNSI) show a composition bias toward low complexity. Residues 712-722 (DENHSESKLPT) show a composition bias toward basic and acidic residues. N-linked (GlcNAc...) asparagine glycans are attached at residues Asn714, Asn754, Asn774, Asn792, Asn806, Asn855, Asn865, Asn874, Asn884, and Asn966. Composition is skewed to polar residues over residues 750–762 (KTSSNESSLSQVT) and 771–782 (RVSNQSLSTVST). Over residues 783 to 799 (EHTEMKESSNLTEKKPE) the composition is skewed to basic and acidic residues. The span at 800–812 (SNSPESNLSESSL) shows a compositional bias: low complexity. Positions 858 to 867 (LVDSQSSNSS) are enriched in low complexity. Disordered stretches follow at residues 858–886 (LVDSQSSNSSVKTVETNVSQDEQTSQNET), 963–982 (TPENETSSPLASSSTTFMTE), and 1003–1029 (VAQQMEDTNSGSSNFQDTQHNVINDEL). Polar residues predominate over residues 868–886 (VKTVETNVSQDEQTSQNET). Positions 1026 to 1029 (NDEL) match the Prevents secretion from ER motif.

Belongs to the WD repeat SEC12 family.

The protein localises to the endoplasmic reticulum membrane. Its subcellular location is the golgi apparatus membrane. Its function is as follows. Putative guanine nucleotide-exchange factor (GEF) involved in the formation or budding of transport vesicles from the ER. Positive regulator of SAR1 probably through inhibition of the GTPase activation by SEC23. The protein is Putative guanine nucleotide-exchange factor SED4 (SED4) of Candida glabrata (strain ATCC 2001 / BCRC 20586 / JCM 3761 / NBRC 0622 / NRRL Y-65 / CBS 138) (Yeast).